A 566-amino-acid chain; its full sequence is Proline--tRNA ligase (566 aa).

The protein belongs to the class-II aminoacyl-tRNA synthetase family. ProS type 1 subfamily. In terms of assembly, homodimer.

It is found in the cytoplasm. The enzyme catalyses tRNA(Pro) + L-proline + ATP = L-prolyl-tRNA(Pro) + AMP + diphosphate. Functionally, catalyzes the attachment of proline to tRNA(Pro) in a two-step reaction: proline is first activated by ATP to form Pro-AMP and then transferred to the acceptor end of tRNA(Pro). As ProRS can inadvertently accommodate and process non-cognate amino acids such as alanine and cysteine, to avoid such errors it has two additional distinct editing activities against alanine. One activity is designated as 'pretransfer' editing and involves the tRNA(Pro)-independent hydrolysis of activated Ala-AMP. The other activity is designated 'posttransfer' editing and involves deacylation of mischarged Ala-tRNA(Pro). The misacylated Cys-tRNA(Pro) is not edited by ProRS. This is Proline--tRNA ligase from Staphylococcus haemolyticus (strain JCSC1435).